The primary structure comprises 284 residues: MFIISGRTMLKKAQQEGYAVPAFNIHNLETLQVVVETAAELRSPLIVAGTPGTFSYAGVGNIVAIAAELAKSWNHPLAVHLDHHEKLADIKMKVAAGVRSVMIDGSHFPFADNIALVKSVVDYCHRYDVSVEAELGRLGGQEDDLIVDGKDALYTHPEQAREFVEKTGIDSLAIAIGTAHGLYTAEPKLDFERLTEIRQRVDVPLVLHGASGLPTRDITRAISLGICKVNVATELKIAFSGALKNYLTQHAEASDPRHYMIPAKAAMKEVVRKVIADCGCEGKL.

Asp-82 serves as the catalytic Proton donor. The Zn(2+) site is built by His-83 and His-180. Dihydroxyacetone phosphate is bound at residue Gly-181. His-208 provides a ligand contact to Zn(2+). Dihydroxyacetone phosphate contacts are provided by residues 209 to 211 and 230 to 233; these read GAS and NVAT.

This sequence belongs to the class II fructose-bisphosphate aldolase family. TagBP aldolase GatY subfamily. In terms of assembly, forms a complex with GatZ. Requires Zn(2+) as cofactor.

It catalyses the reaction D-tagatofuranose 1,6-bisphosphate = D-glyceraldehyde 3-phosphate + dihydroxyacetone phosphate. It functions in the pathway carbohydrate metabolism; D-tagatose 6-phosphate degradation; D-glyceraldehyde 3-phosphate and glycerone phosphate from D-tagatose 6-phosphate: step 2/2. Functionally, catalytic subunit of the tagatose-1,6-bisphosphate aldolase GatYZ, which catalyzes the reversible aldol condensation of dihydroxyacetone phosphate (DHAP or glycerone-phosphate) with glyceraldehyde 3-phosphate (G3P) to produce tagatose 1,6-bisphosphate (TBP). Requires GatZ subunit for full activity and stability. Is involved in the catabolism of galactitol. The polypeptide is D-tagatose-1,6-bisphosphate aldolase subunit GatY (Salmonella enteritidis PT4 (strain P125109)).